Reading from the N-terminus, the 431-residue chain is Interleukin-11 receptor subunit alpha (431 aa).

An N-terminal signal peptide occupies residues 1–23 (MSSSRSGLTRVLVAVATALVSSS). Residues 24 to 371 (TPCPQAWGPP…DPLEQVAVLA (348 aa)) are Extracellular-facing. The 84-residue stretch at 27 to 110 (PQAWGPPGVQ…FGGMVTLKLG (84 aa)) folds into the Ig-like C2-type domain. 3 cysteine pairs are disulfide-bonded: Cys-48/Cys-94, Cys-120/Cys-130, and Cys-170/Cys-180. Fibronectin type-III domains are found at residues 112 to 219 (PPAR…LRPD) and 220 to 317 (PPQG…TPST). N-linked (GlcNAc...) asparagine glycosylation occurs at Asn-127. Residues 151 to 170 (KTLPGAESQRESPSTGPWPC) are disordered. Asn-194 carries N-linked (GlcNAc...) asparagine glycosylation. The short motif at 304 to 308 (WSAWS) is the WSXWS motif element. Residues 310–360 (EAWGTPSTGPLRDEVPDGSRGHEQKLEAAAQEDSPAPPSPSLQPDPRPLDH) are disordered. Over residues 320-335 (LRDEVPDGSRGHEQKL) the composition is skewed to basic and acidic residues. Residues 344–355 (PAPPSPSLQPDP) are compositionally biased toward pro residues. Residues 372–392 (SLGIFSFLGLAVGALALGLWL) traverse the membrane as a helical segment. Residues 393–431 (RLRRSGKDGPQKPGFLAPMIPGDKLPGIPNLQRTPENFS) lie on the Cytoplasmic side of the membrane. The disordered stretch occupies residues 402–431 (PQKPGFLAPMIPGDKLPGIPNLQRTPENFS).

Belongs to the type I cytokine receptor family. Type 3 subfamily. As to quaternary structure, on IL11 binding, forms a multimer complex with IL6ST/gp130. In terms of processing, a short soluble form is also released from the membrane by proteolysis. The sIL11RA is formed either by limited proteolysis of membrane-bound receptors, a process referred to as ectodomain shedding, or directly secreted from the cells after alternative mRNA splicing. mIL11RA is cleaved by the proteases ADAM10, ELANE and PRTN3.

It localises to the membrane. Its subcellular location is the secreted. In terms of biological role, receptor for interleukin-11 (IL11). The receptor systems for IL6, LIF, OSM, CNTF, IL11 and CT1 can utilize IL6ST for initiating signal transmission. The IL11/IL11RA/IL6ST complex may be involved in the control of proliferation and/or differentiation of skeletogenic progenitor or other mesenchymal cells. Essential for the normal development of craniofacial bones and teeth. Restricts suture fusion and tooth number. Functionally, soluble form of IL11 receptor (sIL11RA) that acts as an agonist of IL11 activity. The IL11:sIL11RA complex binds to IL6ST/gp130 on cell surfaces and induces signaling also on cells that do not express membrane-bound IL11RA in a process called IL11 trans-signaling. The protein is Interleukin-11 receptor subunit alpha of Rattus norvegicus (Rat).